Reading from the N-terminus, the 164-residue chain is Ubiquitin-conjugating enzyme E2 2 (164 aa).

The 147-residue stretch at 4 to 150 folds into the UBC core domain; it reads PARRRLMRDF…VKETVEKSWE (147 aa). C88 (glycyl thioester intermediate) is an active-site residue.

Belongs to the ubiquitin-conjugating enzyme family.

It localises to the cytoplasm. The protein resides in the nucleus. The enzyme catalyses S-ubiquitinyl-[E1 ubiquitin-activating enzyme]-L-cysteine + [E2 ubiquitin-conjugating enzyme]-L-cysteine = [E1 ubiquitin-activating enzyme]-L-cysteine + S-ubiquitinyl-[E2 ubiquitin-conjugating enzyme]-L-cysteine.. It participates in protein modification; protein ubiquitination. In terms of biological role, catalyzes the covalent attachment of ubiquitin to other proteins. Plays a role in transcription regulation by catalyzing the monoubiquitination of histone H2B to form H2BK123ub1. H2BK123ub1 gives a specific tag for epigenetic transcriptional activation and is also a prerequisite for H3K4me and H3K79me formation. Also involved in postreplication repair of UV-damaged DNA, in N-end rule-dependent protein degradation and in sporulation. In Kluyveromyces lactis (strain ATCC 8585 / CBS 2359 / DSM 70799 / NBRC 1267 / NRRL Y-1140 / WM37) (Yeast), this protein is Ubiquitin-conjugating enzyme E2 2 (UBC2).